We begin with the raw amino-acid sequence, 116 residues long: NADPH-dependent 7-cyano-7-deazaguanine reductase (116 aa).

The active-site Thioimide intermediate is the Cys-31. Asp-38 acts as the Proton donor in catalysis. Residues 53-55 (VEL) and 72-73 (YE) each bind substrate.

The protein belongs to the GTP cyclohydrolase I family. QueF type 1 subfamily.

It localises to the cytoplasm. The enzyme catalyses 7-aminomethyl-7-carbaguanine + 2 NADP(+) = 7-cyano-7-deazaguanine + 2 NADPH + 3 H(+). The protein operates within tRNA modification; tRNA-queuosine biosynthesis. In terms of biological role, catalyzes the NADPH-dependent reduction of 7-cyano-7-deazaguanine (preQ0) to 7-aminomethyl-7-deazaguanine (preQ1). This Chloroherpeton thalassium (strain ATCC 35110 / GB-78) protein is NADPH-dependent 7-cyano-7-deazaguanine reductase.